The chain runs to 399 residues: MNIHEYQAKAVLQPFGVSLSKGVAILKATDAEAAAKQLGGPIWVVKSQIHAGGRGKGKFKEASAGDKGGVRLAKSIEEVKQYAAEMLGATLVTIQTGPAGKQVNRLYIEDGSDIEKEFYLSLLVDRVTSRISFVVSTEGGMNIEDVAHDTPEKIISFSVDPATGIMGHHGRTVAKALGLTGDLAKQAERLVAQLYAAFISKDMEMLEINPLVVTKQGELKCLDAKMSFDGNALYRHPDISALRDETEEDAKEIEASKYDLNYVTLDGTIGCMVNGAGLAMATMDIIKLYGMTPANFLDVGGGANKEKVTAAFKIITADPNVKGILINIFGGIMKCDIIAEGVVAAVKDVGLKVPLVVRLEGTNVEAGKKIIQESGLNVLSADDLDDAAQKIVKAVKEAA.

The ATP-grasp domain maps to 9-254; it reads KAVLQPFGVS…ETEEDAKEIE (246 aa). ATP is bound by residues Lys-46, 53–55, Glu-109, Ser-112, and Glu-117; that span reads GRG. 2 residues coordinate Mg(2+): Asn-209 and Asp-223. Substrate contacts are provided by residues Asn-274 and 331-333; that span reads GIM.

This sequence belongs to the succinate/malate CoA ligase beta subunit family. Heterotetramer of two alpha and two beta subunits. Mg(2+) serves as cofactor.

It catalyses the reaction succinate + ATP + CoA = succinyl-CoA + ADP + phosphate. The catalysed reaction is GTP + succinate + CoA = succinyl-CoA + GDP + phosphate. The protein operates within carbohydrate metabolism; tricarboxylic acid cycle; succinate from succinyl-CoA (ligase route): step 1/1. Succinyl-CoA synthetase functions in the citric acid cycle (TCA), coupling the hydrolysis of succinyl-CoA to the synthesis of either ATP or GTP and thus represents the only step of substrate-level phosphorylation in the TCA. The beta subunit provides nucleotide specificity of the enzyme and binds the substrate succinate, while the binding sites for coenzyme A and phosphate are found in the alpha subunit. This chain is Succinate--CoA ligase [ADP-forming] subunit beta, found in Rhodopseudomonas palustris (strain BisB18).